A 1141-amino-acid chain; its full sequence is Serine-aspartate repeat-containing protein E (1141 aa).

Positions 1–52 (MINRDNKKAITKKGMISNRLNKFSIRKYTVGTASILVGTTLIFGLGNQEAKA) are cleaved as a signal peptide. The short motif at 23–34 (FSIRKYTVGTAS) is the YSIRK-G/S signaling motif element. The interval 53–601 (AENTSTENAK…GDGTVKPEEK (549 aa)) is ligand binding A region. The segment at 54-225 (ENTSTENAKQ…SKEELKNNPE (172 aa)) is disordered. The span at 61 to 75 (AKQDDATTSDNKEVV) shows a compositional bias: basic and acidic residues. The span at 77–90 (EAENNSTTENDSTN) shows a compositional bias: low complexity. Residues 92–109 (IKKETNTDSQPEAKEEST) show a composition bias toward basic and acidic residues. Residues 110–126 (KSSTQQQQNNVTATTET) show a composition bias toward low complexity. Positions 130 to 145 (NIEKENVKPSTDKTAT) are enriched in basic and acidic residues. Residues 158–207 (PNNTNNDVTTKPSTSEIQTKPTTPQESTNIENSQPQPTPSKVDNQVTDAT) show a composition bias toward polar residues. The span at 216-225 (SKEELKNNPE) shows a compositional bias: basic and acidic residues. CNA-B domains follow at residues 602–714 (LYKI…YKEP), 715–824 (KYNL…YKTP), and 825–935 (KYSL…EEDT). Residues 899–1117 (VTNTTEDDKD…GSENNGSNNA (219 aa)) form a disordered region. Acidic residues-rich tracts occupy residues 903–913 (TEDDKDADGGE) and 930–1080 (YFEE…DSDS). The short motif at 1104–1108 (LPETG) is the LPXTG sorting signal element. Thr1107 carries the pentaglycyl murein peptidoglycan amidated threonine modification. Positions 1108 to 1141 (GSENNGSNNATLFGGLFAALGSLLLFGRRKKQNK) are cleaved as a propeptide — removed by sortase.

Belongs to the serine-aspartate repeat-containing protein (SDr) family. As to quaternary structure, interacts with host complement factor H/CFAH (via C-terminus). Interacts with host complement regulator C4BPA.

The protein localises to the secreted. Its subcellular location is the cell wall. Its function is as follows. Cell surface-associated calcium-binding protein which plays an important role in adhesion and pathogenesis. Contributes to the resistance to killing by innate immune components in blood and thus attenuates bacterial clearance by interacting with host complement factor H/CFAH and modulating its activity. Also inhibits bacterial opsonization and killing by interacting with host complement regulator C4BPA and thus inhibiting classical complement pathway activation. In Staphylococcus aureus (strain MSSA476), this protein is Serine-aspartate repeat-containing protein E (sdrE).